We begin with the raw amino-acid sequence, 345 residues long: Trans-enoyl reductase tndF (345 aa).

The tract at residues 1–26 is disordered; the sequence is MAREHQAAILPQPGGPLSVGMRPTPK. NADP(+) contacts are provided by residues 44–49, 168–171, 191–194, Tyr-209, and 244–245; these read CDYYQR, SSSV, SPEH, and LD.

It belongs to the zinc-containing alcohol dehydrogenase family.

Its pathway is secondary metabolite biosynthesis; terpenoid biosynthesis. In terms of biological role, trans-enoyl reductase; part of the gene cluster that mediates the biosynthesis of talaronoid C, a fusicoccane diterpenoid with an unprecedented tricyclic 5/8/6 ring system. The first step in the pathway is performed by the fusicoccadiene synthase tndC that possesses both prenyl transferase and terpene cyclase activity, converting isopentenyl diphosphate and dimethylallyl diphosphate into geranylgeranyl diphosphate (GGDP) and further converting GGDP into talarodiene, a precursor for talaronoid C. The remaining enzymes from the cluster include the cytochrome P450 monooxygenase tndB, the aldehyde reductase tndE and the alcohol dehydrogenase tndF that are involved in the conversion of talarodiene into talaronoid C. In Aspergillus flavipes, this protein is Trans-enoyl reductase tndF.